Here is a 174-residue protein sequence, read N- to C-terminus: Shikimate kinase 2 (174 aa).

12–17 serves as a coordination point for ATP; sequence GCGKTT. Mg(2+) contacts are provided by Thr16 and Asp32. Residues Asp34, Arg58, and Gly79 each contribute to the substrate site. The interval 112 to 126 is LID domain; the sequence is QAAPEEDLRPTLTGK. Arg120 contacts ATP. Arg139 contributes to the substrate binding site.

Belongs to the shikimate kinase family. AroL subfamily. As to quaternary structure, monomer. It depends on Mg(2+) as a cofactor.

Its subcellular location is the cytoplasm. The enzyme catalyses shikimate + ATP = 3-phosphoshikimate + ADP + H(+). Its pathway is metabolic intermediate biosynthesis; chorismate biosynthesis; chorismate from D-erythrose 4-phosphate and phosphoenolpyruvate: step 5/7. Its function is as follows. Catalyzes the specific phosphorylation of the 3-hydroxyl group of shikimic acid using ATP as a cosubstrate. The sequence is that of Shikimate kinase 2 from Escherichia coli O81 (strain ED1a).